The sequence spans 103 residues: ATP synthase F(0) complex subunit g, mitochondrial (103 aa).

The residue at position 2 (A2) is an N-acetylalanine. Residues K11, K24, K35, and K54 each carry the N6-acetyllysine modification.

It belongs to the ATPase g subunit family. Component of the ATP synthase complex composed at least of ATP5F1A/subunit alpha, ATP5F1B/subunit beta, ATP5MC1/subunit c (homooctomer), MT-ATP6/subunit a, MT-ATP8/subunit 8, ATP5ME/subunit e, ATP5MF/subunit f, ATP5MG/subunit g, ATP5MK/subunit k, ATP5MJ/subunit j, ATP5F1C/subunit gamma, ATP5F1D/subunit delta, ATP5F1E/subunit epsilon, ATP5PF/subunit F6, ATP5PB/subunit b, ATP5PD/subunit d, ATP5PO/subunit OSCP. ATP synthase complex consists of a soluble F(1) head domain (subunits alpha(3) and beta(3)) - the catalytic core - and a membrane F(0) domain - the membrane proton channel (subunits c, a, 8, e, f, g, k and j). These two domains are linked by a central stalk (subunits gamma, delta, and epsilon) rotating inside the F1 region and a stationary peripheral stalk (subunits F6, b, d, and OSCP).

The protein resides in the mitochondrion. The protein localises to the mitochondrion inner membrane. In terms of biological role, subunit g, of the mitochondrial membrane ATP synthase complex (F(1)F(0) ATP synthase or Complex V) that produces ATP from ADP in the presence of a proton gradient across the membrane which is generated by electron transport complexes of the respiratory chain. ATP synthase complex consist of a soluble F(1) head domain - the catalytic core - and a membrane F(1) domain - the membrane proton channel. These two domains are linked by a central stalk rotating inside the F(1) region and a stationary peripheral stalk. During catalysis, ATP synthesis in the catalytic domain of F(1) is coupled via a rotary mechanism of the central stalk subunits to proton translocation. In vivo, can only synthesize ATP although its ATP hydrolase activity can be activated artificially in vitro. Part of the complex F(0) domain. This is ATP synthase F(0) complex subunit g, mitochondrial from Mus musculus (Mouse).